The chain runs to 115 residues: Aspartate 1-decarboxylase (115 aa).

S25 (schiff-base intermediate with substrate; via pyruvic acid) is an active-site residue. The residue at position 25 (S25) is a Pyruvic acid (Ser). Residue T57 participates in substrate binding. The active-site Proton donor is Y58. 73-75 (GPA) is a binding site for substrate.

This sequence belongs to the PanD family. Heterooctamer of four alpha and four beta subunits. Pyruvate serves as cofactor. Post-translationally, is synthesized initially as an inactive proenzyme, which is activated by self-cleavage at a specific serine bond to produce a beta-subunit with a hydroxyl group at its C-terminus and an alpha-subunit with a pyruvoyl group at its N-terminus.

The protein resides in the cytoplasm. The catalysed reaction is L-aspartate + H(+) = beta-alanine + CO2. It participates in cofactor biosynthesis; (R)-pantothenate biosynthesis; beta-alanine from L-aspartate: step 1/1. In terms of biological role, catalyzes the pyruvoyl-dependent decarboxylation of aspartate to produce beta-alanine. The polypeptide is Aspartate 1-decarboxylase (Cytophaga hutchinsonii (strain ATCC 33406 / DSM 1761 / CIP 103989 / NBRC 15051 / NCIMB 9469 / D465)).